Reading from the N-terminus, the 235-residue chain is Fms-related tyrosine kinase 3 ligand (235 aa).

An N-terminal signal peptide occupies residues 1-26 (MTVLAPAWSPTTYLLLLLLLSSGLSG). The Extracellular segment spans residues 27-184 (TQDCSFQHSP…EATAPTAPQP (158 aa)). 3 disulfides stabilise this stretch: Cys-30/Cys-111, Cys-70/Cys-153, and Cys-119/Cys-158. N-linked (GlcNAc...) asparagine glycosylation is found at Asn-126 and Asn-149. Residues 185-205 (PLLLLLLLPVGLLLLAAAWCL) form a helical membrane-spanning segment. Residues 206-235 (HWQRTRRRTPRPGEQVPPVPSPQDLLLVEH) are Cytoplasmic-facing. A disordered region spans residues 213 to 235 (RTPRPGEQVPPVPSPQDLLLVEH).

Homodimer (isoform 2).

It is found in the cell membrane. It localises to the secreted. Its function is as follows. Stimulates the proliferation of early hematopoietic cells by activating FLT3. Synergizes well with a number of other colony stimulating factors and interleukins. Required for the development of B cells, and dendritic cells (DCs). In Homo sapiens (Human), this protein is Fms-related tyrosine kinase 3 ligand (FLT3LG).